A 239-amino-acid chain; its full sequence is Octanoyltransferase (239 aa).

The BPL/LPL catalytic domain maps to glutamate 48 to valine 236. Residues arginine 87 to histidine 94, alanine 167 to glycine 169, and glycine 180 to serine 182 contribute to the substrate site. Cysteine 198 functions as the Acyl-thioester intermediate in the catalytic mechanism.

This sequence belongs to the LipB family.

The protein resides in the cytoplasm. The catalysed reaction is octanoyl-[ACP] + L-lysyl-[protein] = N(6)-octanoyl-L-lysyl-[protein] + holo-[ACP] + H(+). Its pathway is protein modification; protein lipoylation via endogenous pathway; protein N(6)-(lipoyl)lysine from octanoyl-[acyl-carrier-protein]: step 1/2. Functionally, catalyzes the transfer of endogenously produced octanoic acid from octanoyl-acyl-carrier-protein onto the lipoyl domains of lipoate-dependent enzymes. Lipoyl-ACP can also act as a substrate although octanoyl-ACP is likely to be the physiological substrate. In Rhizobium etli (strain CIAT 652), this protein is Octanoyltransferase.